A 705-amino-acid polypeptide reads, in one-letter code: Kinesin-like protein KIF2A (705 aa).

Residues 65–185 form a disordered region; it reads DLVPDEDIEP…QQELREKRAQ (121 aa). Phosphoserine is present on serine 75. Position 96 is a phosphothreonine (threonine 96). The residue at position 99 (serine 99) is a Phosphoserine. Lysine 101 bears the N6-acetyllysine mark. Polar residues predominate over residues 122-139; sequence LPEQSSSAQQNGSVSDIS. Phosphoserine occurs at positions 134 and 139. Residues 153–186 are a coiled coil; the sequence is RRKSNCVKEVEKLQEKREKRRLQQQELREKRAQD. Residues 158–185 show a composition bias toward basic and acidic residues; sequence CVKEVEKLQEKREKRRLQQQELREKRAQ. Residues 222 to 552 enclose the Kinesin motor domain; that stretch reads RICVCVRKRP…LRYANRVKEL (331 aa). 312-319 contributes to the ATP binding site; the sequence is GQTGSGKT. Glutamine 572 carries the phosphoserine modification. The stretch at 659–698 forms a coiled coil; the sequence is ATQLEAILEQKIDILTELRDKVKSFRAALQEEEQASKQIN.

This sequence belongs to the TRAFAC class myosin-kinesin ATPase superfamily. Kinesin family. MCAK/KIF2 subfamily. Interacts with AURKA and PLK1. Interacts with PSRC1. Interacts with MCRS1; the interaction enhances recruitment of KIF2A to the minus ends of spindle microtubules which promotes chromosome alignment.

It localises to the cytoplasm. Its subcellular location is the cytoskeleton. It is found in the microtubule organizing center. The protein resides in the centrosome. The protein localises to the spindle pole. It localises to the spindle. Its function is as follows. Plus end-directed microtubule-dependent motor required for normal brain development. May regulate microtubule dynamics during axonal growth. Required for normal progression through mitosis. Required for normal congress of chromosomes at the metaphase plate. Required for normal spindle dynamics during mitosis. Promotes spindle turnover. Implicated in formation of bipolar mitotic spindles. Has microtubule depolymerization activity. The polypeptide is Kinesin-like protein KIF2A (Rattus norvegicus (Rat)).